A 535-amino-acid polypeptide reads, in one-letter code: MRSSVSRQTYSTKGAFSSSSASGGGGSQARTSFSSVTVSRNSGRGGGPRCGPSMGGFGSQSLYNLGGSKSISVSVAGGASAGRVLGGFGLGGGAYMGLGACRPMLGPVCPPGGIQQVTVNQSLLTPLHVEIDPEIQRVRTEEREQIKTLNNKFASFIDKVRFLEQQNKVLETKWALLQEQGQKSGVTRNNLEPLFEHFINNLRGKLDNLQSERGRLDSELRNVQDLAEDFKTKYEDEINKRTAAENEFVVLKKDVDAAYVGRMDLHGMVDHLMGEIDFLRHLYEEELSQVQTHVSDTSVILSMDNNRNLDLDSIIAEVKAQYEQIAQRSRAEAESWYQTKYEELQVTAGKHGDNLRDTKNEIAELTRTVQRLQGEADAVKKQCQQLQTAIADAEQHGELALKDAQKKLGDLDAALNQAKEDLARLLRDYQALMNVKLALDVEIATYRKLLESEESRMSGECPSAVSISVTGNSTTVCGGGAAGFGGGISLGGGGGASKGRFSTNAGYSTVKGGPVSGGTSILRKTTTVKTSSRRY.

Composition is skewed to polar residues over residues 1 to 12 and 28 to 38; these read MRSSVSRQTYST and QARTSFSSVTV. The disordered stretch occupies residues 1–53; the sequence is MRSSVSRQTYSTKGAFSSSSASGGGGSQARTSFSSVTVSRNSGRGGGPRCGPS. The tract at residues 1–141 is head; that stretch reads MRSSVSRQTY…DPEIQRVRTE (141 aa). A compositionally biased stretch (gly residues) spans 43 to 53; it reads GRGGGPRCGPS. Positions 142-177 are coil 1A; sequence EREQIKTLNNKFASFIDKVRFLEQQNKVLETKWALL. The 316-residue stretch at 142–457 folds into the IF rod domain; the sequence is EREQIKTLNN…KLLESEESRM (316 aa). A linker 1 region spans residues 178 to 198; it reads QEQGQKSGVTRNNLEPLFEHF. The interval 199 to 290 is coil 1B; sequence INNLRGKLDN…HLYEEELSQV (92 aa). The linker 12 stretch occupies residues 291-314; that stretch reads QTHVSDTSVILSMDNNRNLDLDSI. The interval 315 to 453 is coil 2; sequence IAEVKAQYEQ…ATYRKLLESE (139 aa). Residues 454–535 form a tail region; that stretch reads ESRMSGECPS…TTVKTSSRRY (82 aa).

This sequence belongs to the intermediate filament family. As to quaternary structure, heterotetramer of two type I and two type II keratins.

In Bos taurus (Bovine), this protein is Keratin, type II cytoskeletal 79 (KRT79).